The following is a 319-amino-acid chain: High mobility group B protein 10 (319 aa).

The span at 1–13 (MSTDISPPYSQTH) shows a compositional bias: polar residues. The segment at 1–25 (MSTDISPPYSQTHVEPVNGYPSDNK) is disordered. The ARID domain maps to 40–131 (VRNSALFWEK…FLFQLEHVYY (92 aa)). Over residues 203-220 (PSQSQQTMETPSAIVQSS) the composition is skewed to polar residues. The disordered stretch occupies residues 203-230 (PSQSQQTMETPSAIVQSSQRRHRKKSKL). A DNA-binding region (HMG box) is located at residues 238–305 (PKCHRSGYNF…RYRIEMLEYK (68 aa)).

Ubiquitously expressed.

It is found in the nucleus. Binds preferentially DNA with A/T-rich content. This Arabidopsis thaliana (Mouse-ear cress) protein is High mobility group B protein 10 (HMGB10).